The following is a 335-amino-acid chain: Capsular polysaccharide phosphotransferase WcwK (335 aa).

Belongs to the stealth family.

The sequence is that of Capsular polysaccharide phosphotransferase WcwK (wcwK) from Streptococcus pneumoniae.